The primary structure comprises 76 residues: uncharacterized protein (76 aa).

EF-hand domains lie at 9–44 (EMDE…LGEN) and 43–76 (ENLT…IHIS).

It localises to the cytoplasm. Its subcellular location is the nucleus. This is an uncharacterized protein from Schizosaccharomyces pombe (strain 972 / ATCC 24843) (Fission yeast).